Here is a 414-residue protein sequence, read N- to C-terminus: Hydroxysqualene dehydroxylase (414 aa).

It belongs to the HpnE family.

The enzyme catalyses squalene + FAD + H2O + H(+) = hydroxysqualene + FADH2. The protein operates within secondary metabolite biosynthesis; hopanoid biosynthesis. Its function is as follows. Involved in the biosynthesis of the hopanoid precursor squalene (SQ) from farnesyl diphosphate (FPP). Catalyzes the third (last) step, the reduction of hydroxysqualene (HSQ) to SQ. The protein is Hydroxysqualene dehydroxylase of Zymomonas mobilis subsp. mobilis (strain ATCC 31821 / ZM4 / CP4).